The following is a 425-amino-acid chain: Serine--tRNA ligase (425 aa).

The interval 108–134 (YPNLPSEACPDGRSEDDNKEVRRWGDP) is disordered. The span at 117–134 (PDGRSEDDNKEVRRWGDP) shows a compositional bias: basic and acidic residues. 233–235 (TAE) is an L-serine binding site. ATP is bound at residue 264–266 (RRE). Glu287 lines the L-serine pocket. 351-354 (EISS) serves as a coordination point for ATP. Ser385 lines the L-serine pocket.

It belongs to the class-II aminoacyl-tRNA synthetase family. Type-1 seryl-tRNA synthetase subfamily. As to quaternary structure, homodimer. The tRNA molecule binds across the dimer.

The protein localises to the cytoplasm. It carries out the reaction tRNA(Ser) + L-serine + ATP = L-seryl-tRNA(Ser) + AMP + diphosphate + H(+). The enzyme catalyses tRNA(Sec) + L-serine + ATP = L-seryl-tRNA(Sec) + AMP + diphosphate + H(+). It participates in aminoacyl-tRNA biosynthesis; selenocysteinyl-tRNA(Sec) biosynthesis; L-seryl-tRNA(Sec) from L-serine and tRNA(Sec): step 1/1. In terms of biological role, catalyzes the attachment of serine to tRNA(Ser). Is also able to aminoacylate tRNA(Sec) with serine, to form the misacylated tRNA L-seryl-tRNA(Sec), which will be further converted into selenocysteinyl-tRNA(Sec). The protein is Serine--tRNA ligase of Synechococcus sp. (strain CC9311).